Reading from the N-terminus, the 813-residue chain is Ankyrin repeat domain-containing protein SOWAHB (813 aa).

Disordered stretches follow at residues 142 to 256 (SAAP…QSLS) and 400 to 436 (ETCG…DSHK). Residues 158-176 (MSEKARVNPSHWDTKRYYP) are compositionally biased toward basic and acidic residues. The span at 177–189 (EDPPVPDSLPVSP) shows a compositional bias: pro residues. Positions 191 to 202 (CTNTRQSSFTST) are enriched in polar residues. Residues 208-244 (HSLSSNNLSSSFSSPESPGLVAKPYNASPSPAGSSPN) are compositionally biased toward low complexity. Positions 245 to 256 (IREQTPKSQSLS) are enriched in polar residues. The span at 400–416 (ETCGSEESDSGEGGDCD) shows a compositional bias: acidic residues. ANK repeat units lie at residues 657-686 (TGYT…KAGI) and 696-726 (NGYT…NVKV).

The protein belongs to the SOWAH family.

This chain is Ankyrin repeat domain-containing protein SOWAHB (sowahb), found in Xenopus laevis (African clawed frog).